Consider the following 73-residue polypeptide: DNA-directed RNA polymerase subunit Rpo10 (73 aa).

The Zn(2+) site is built by C7, C10, C44, and C45.

This sequence belongs to the archaeal Rpo10/eukaryotic RPB10 RNA polymerase subunit family. In terms of assembly, part of the RNA polymerase complex. Forms an Rpo3-Rpo10-Rpo11-Rpo12 complex upon coexpression. Requires Zn(2+) as cofactor.

The protein resides in the cytoplasm. The catalysed reaction is RNA(n) + a ribonucleoside 5'-triphosphate = RNA(n+1) + diphosphate. DNA-dependent RNA polymerase (RNAP) catalyzes the transcription of DNA into RNA using the four ribonucleoside triphosphates as substrates. This Methanocaldococcus jannaschii (strain ATCC 43067 / DSM 2661 / JAL-1 / JCM 10045 / NBRC 100440) (Methanococcus jannaschii) protein is DNA-directed RNA polymerase subunit Rpo10.